We begin with the raw amino-acid sequence, 501 residues long: Acetyl-coenzyme A carboxylase carboxyl transferase subunit beta, chloroplastic (501 aa).

A CoA carboxyltransferase N-terminal domain is found at 231–501; the sequence is LWIECENCYG…LIQNEKESRS (271 aa). Zn(2+)-binding residues include Cys235, Cys238, Cys254, and Cys257. A C4-type zinc finger spans residues 235–257; sequence CENCYGLNYKKILKSKMNICEHC.

Belongs to the AccD/PCCB family. In terms of assembly, acetyl-CoA carboxylase is a heterohexamer composed of biotin carboxyl carrier protein, biotin carboxylase and 2 subunits each of ACCase subunit alpha and ACCase plastid-coded subunit beta (accD). The cofactor is Zn(2+).

Its subcellular location is the plastid. It is found in the chloroplast stroma. It carries out the reaction N(6)-carboxybiotinyl-L-lysyl-[protein] + acetyl-CoA = N(6)-biotinyl-L-lysyl-[protein] + malonyl-CoA. The protein operates within lipid metabolism; malonyl-CoA biosynthesis; malonyl-CoA from acetyl-CoA: step 1/1. Component of the acetyl coenzyme A carboxylase (ACC) complex. Biotin carboxylase (BC) catalyzes the carboxylation of biotin on its carrier protein (BCCP) and then the CO(2) group is transferred by the transcarboxylase to acetyl-CoA to form malonyl-CoA. This Lotus japonicus (Lotus corniculatus var. japonicus) protein is Acetyl-coenzyme A carboxylase carboxyl transferase subunit beta, chloroplastic.